Consider the following 399-residue polypeptide: Multi-drug resistance efflux pump PmrA (399 aa).

The next 10 membrane-spanning stretches (helical) occupy residues 12 to 34 (IAWF…MPIF), 49 to 71 (AGLA…GILA), 84 to 106 (GLAM…LIFL), 140 to 162 (LSTG…AELF), 167 to 186 (VFLL…ICFI), 217 to 239 (LFLT…ALYV), 248 to 270 (LLFV…AGVM), 306 to 328 (LGLY…NALL), 340 to 362 (VFAF…GSAV), and 366 to 388 (FGYH…FNLI).

The protein belongs to the major facilitator superfamily. TCR/Tet family.

The protein localises to the cell membrane. Functionally, efflux pump for various substrates. This is Multi-drug resistance efflux pump PmrA (pmrA) from Streptococcus pneumoniae serotype 4 (strain ATCC BAA-334 / TIGR4).